The following is a 342-amino-acid chain: Ribosomal RNA small subunit methyltransferase H (342 aa).

S-adenosyl-L-methionine is bound by residues 62-64 (GGH), aspartate 82, phenylalanine 108, aspartate 129, and glutamine 136. The disordered stretch occupies residues 280–319 (RHSKGQYPEDENLPMPPKRPRYFSKPKRVGPSKAEISHNP). Positions 297-309 (KRPRYFSKPKRVG) are enriched in basic residues.

The protein belongs to the methyltransferase superfamily. RsmH family.

Its subcellular location is the cytoplasm. It catalyses the reaction cytidine(1402) in 16S rRNA + S-adenosyl-L-methionine = N(4)-methylcytidine(1402) in 16S rRNA + S-adenosyl-L-homocysteine + H(+). Its function is as follows. Specifically methylates the N4 position of cytidine in position 1402 (C1402) of 16S rRNA. The chain is Ribosomal RNA small subunit methyltransferase H from Psychrobacter cryohalolentis (strain ATCC BAA-1226 / DSM 17306 / VKM B-2378 / K5).